The sequence spans 121 residues: Movement protein TGBp3 (121 aa).

The interval 1–40 (MHYPTEADTSTGPNPSATSAPVRPRHVTPSLSPSSSSSPS) is disordered. The Lumenal segment spans residues 1-43 (MHYPTEADTSTGPNPSATSAPVRPRHVTPSLSPSSSSSPSPDS). Polar residues predominate over residues 7 to 19 (ADTSTGPNPSATS). The span at 29-40 (PSLSPSSSSSPS) shows a compositional bias: low complexity. A helical membrane pass occupies residues 44-64 (FYYFLAAAVILTAALAAALLT). Topologically, residues 65–121 (PNPGCTIVITGHTTIIQGSCPIPPQLVLAAHPRGLSLEQYLKFTNTLPDGSQHRSHR) are cytoplasmic.

It belongs to the Tymovirales TGBp3 protein family.

It is found in the host endoplasmic reticulum membrane. Functionally, plays a role in viral cell-to-cell propagation, by facilitating genome transport to neighboring plant cells through plasmosdesmata. May induce the formation of granular vesicles derived from the Endoplasmic reticulum, which align on actin filaments. This chain is Movement protein TGBp3, found in Plantago asiatica (P1AMV).